A 357-amino-acid chain; its full sequence is Naringenin,2-oxoglutarate 3-dioxygenase (357 aa).

The Fe2OG dioxygenase domain maps to 189–293 (CVDMDQKIVV…RLSIATFQNP (105 aa)). 3 residues coordinate Fe cation: His216, Asp218, and His274. A 2-oxoglutarate-binding site is contributed by Arg284.

This sequence belongs to the iron/ascorbate-dependent oxidoreductase family. Fe(2+) serves as cofactor. It depends on L-ascorbate as a cofactor.

It catalyses the reaction a (2S)-flavan-4-one + 2-oxoglutarate + O2 = a (2R,3R)-dihydroflavonol + succinate + CO2. The protein operates within secondary metabolite biosynthesis; flavonoid biosynthesis. In terms of biological role, catalyzes the 3-beta-hydroxylation of 2S-flavanones to 2R,3R-dihydroflavonols which are intermediates in the biosynthesis of flavonols, anthocyanidins, catechins and proanthocyanidins in plants. In Matthiola incana (Common stock), this protein is Naringenin,2-oxoglutarate 3-dioxygenase (FHT).